The chain runs to 343 residues: Selenide, water dikinase (343 aa).

The active site involves C15. ATP is bound by residues K18 and 46–48; that span reads HKD. Position 49 (D49) interacts with Mg(2+). ATP contacts are provided by residues D66, D89, and 137 to 139; that span reads GHS. Residue D89 participates in Mg(2+) binding. Mg(2+) is bound at residue D225.

This sequence belongs to the selenophosphate synthase 1 family. Class I subfamily. Homodimer. The cofactor is Mg(2+).

The catalysed reaction is hydrogenselenide + ATP + H2O = selenophosphate + AMP + phosphate + 2 H(+). Functionally, synthesizes selenophosphate from selenide and ATP. The sequence is that of Selenide, water dikinase from Sulfurimonas denitrificans (strain ATCC 33889 / DSM 1251) (Thiomicrospira denitrificans (strain ATCC 33889 / DSM 1251)).